The primary structure comprises 484 residues: MSMTTSRERNVPPDDNEIELGRSRHSDVAPESESPQAHLLNSDVASVTKNFMRNASHATANSGAIAAVLSYCIASISMTVINKFTVSGEKFTMNLLVLLCQCSVGVAMVYAAKCMGWIQIRTLNMRDVKTWFPISTMLVFVIYTGSKALQHMDIPIYTIFKNLTIILIAYGELLWFNGRITPMVFLSFILMVLSSIIAAWPDLAPSTAKTLYSRAFESLNLYTGVPHATEGWGEGVRTEAASAMHPHTALSPLSVKPYVGAATPLAAAVAQQNSEAAASSSTLSSWSTNGYVWMLANCMISATYVLVMRKRIKLTGFKDWDTMFYNNLLSIPVLLFMSLLVENWSVETFEHNFPREKRSTLVFAILLSGTGGVFISYTTAWCIRVTSSTTYSMVGALNKLPLALSGMLFFGNPVTPYNSIGVAVGFIAGIVYAVGKYKQVVAARIANSDATGASTSLSSSSSAAPSGEYVFDLKGEIPTHTRQQ.

2 stretches are compositionally biased toward basic and acidic residues: residues methionine 1–proline 12 and glutamate 19–valine 28. Positions methionine 1–serine 34 are disordered. Residues methionine 1–alanine 60 are Cytoplasmic-facing. The chain crosses the membrane as a helical span at residues asparagine 61–isoleucine 81. The Lumenal segment spans residues asparagine 82–lysine 90. A helical membrane pass occupies residues phenylalanine 91–alanine 111. Over alanine 112–lysine 129 the chain is Cytoplasmic. The helical transmembrane segment at threonine 130–glutamine 150 threads the bilayer. At histidine 151–proline 155 the chain is on the lumenal side. Residues isoleucine 156–phenylalanine 176 form a helical membrane-spanning segment. Residues asparagine 177–arginine 179 lie on the Cytoplasmic side of the membrane. The chain crosses the membrane as a helical span at residues isoleucine 180–tryptophan 200. At proline 201–serine 287 the chain is on the lumenal side. A helical transmembrane segment spans residues threonine 288–methionine 308. Over arginine 309–aspartate 321 the chain is Cytoplasmic. A helical transmembrane segment spans residues threonine 322–glutamate 342. N-linked (GlcNAc...) asparagine glycosylation is present at asparagine 343. Residues asparagine 343–threonine 360 lie on the Lumenal side of the membrane. The helical transmembrane segment at leucine 361–tryptophan 381 threads the bilayer. Over cysteine 382–threonine 390 the chain is Cytoplasmic. Residues tyrosine 391–glycine 411 traverse the membrane as a helical segment. Over asparagine 412 to proline 413 the chain is Lumenal. The chain crosses the membrane as a helical span at residues valine 414–valine 434. Residues glycine 435–glutamine 484 lie on the Cytoplasmic side of the membrane.

Belongs to the TPT transporter family. SLC35D subfamily. Homooligomer.

The protein localises to the golgi apparatus membrane. It is found in the cytoplasmic vesicle membrane. Its subcellular location is the endoplasmic reticulum membrane. Functionally, involved in the import of GDP-mannose from the cytoplasm into the Golgi lumen. The polypeptide is GDP-mannose transporter (VRG4) (Malassezia globosa (strain ATCC MYA-4612 / CBS 7966) (Dandruff-associated fungus)).